The following is an 87-amino-acid chain: Cell division topological specificity factor (87 aa).

This sequence belongs to the MinE family.

Functionally, prevents the cell division inhibition by proteins MinC and MinD at internal division sites while permitting inhibition at polar sites. This ensures cell division at the proper site by restricting the formation of a division septum at the midpoint of the long axis of the cell. This is Cell division topological specificity factor from Aliivibrio fischeri (strain ATCC 700601 / ES114) (Vibrio fischeri).